A 314-amino-acid polypeptide reads, in one-letter code: Serine/threonine-protein phosphatase PP2A-4 catalytic subunit (314 aa).

Residues D62, H64, D90, and N122 each coordinate Mn(2+). H123 (proton donor) is an active-site residue. Positions 172 and 246 each coordinate Mn(2+).

This sequence belongs to the PPP phosphatase family. PP-2A subfamily. The cofactor is Mn(2+).

It localises to the cytoplasm. The enzyme catalyses O-phospho-L-seryl-[protein] + H2O = L-seryl-[protein] + phosphate. The catalysed reaction is O-phospho-L-threonyl-[protein] + H2O = L-threonyl-[protein] + phosphate. In Oryza sativa subsp. japonica (Rice), this protein is Serine/threonine-protein phosphatase PP2A-4 catalytic subunit (PP2A4).